Here is a 234-residue protein sequence, read N- to C-terminus: Opacity protein opA51 (234 aa).

A signal peptide is located at residue Ala-1.

It belongs to the opacity porin family.

It localises to the cell outer membrane. In terms of biological role, implicated in a number of adherence functions. OPA proteins are implicated in pathogenesis and are subject to phase variation. This is Opacity protein opA51 (opaB) from Neisseria gonorrhoeae.